Here is a 314-residue protein sequence, read N- to C-terminus: Small ribosomal subunit biogenesis GTPase RsgA (314 aa).

The interval 1–20 is disordered; that stretch reads MKRAPTKQPAKPAARGGERA. Positions 85–246 constitute a CP-type G domain; the sequence is SDQFKSKLFA…LIDSPGFQEF (162 aa). GTP is bound by residues 134-137 and 188-196; these read NKID and GQSGMGKST. Zn(2+) is bound by residues C270, C275, H277, and C283.

Belongs to the TRAFAC class YlqF/YawG GTPase family. RsgA subfamily. As to quaternary structure, monomer. Associates with 30S ribosomal subunit, binds 16S rRNA. The cofactor is Zn(2+).

It localises to the cytoplasm. One of several proteins that assist in the late maturation steps of the functional core of the 30S ribosomal subunit. Helps release RbfA from mature subunits. May play a role in the assembly of ribosomal proteins into the subunit. Circularly permuted GTPase that catalyzes slow GTP hydrolysis, GTPase activity is stimulated by the 30S ribosomal subunit. In Burkholderia pseudomallei (strain K96243), this protein is Small ribosomal subunit biogenesis GTPase RsgA.